The primary structure comprises 196 residues: RNA-free ribonuclease P (196 aa).

It belongs to the HARP family.

The enzyme catalyses Endonucleolytic cleavage of RNA, removing 5'-extranucleotides from tRNA precursor.. Functionally, RNA-free RNase P that catalyzes the removal of the 5'-leader sequence from pre-tRNA to produce the mature 5'-terminus. The polypeptide is RNA-free ribonuclease P (Thermodesulfovibrio yellowstonii (strain ATCC 51303 / DSM 11347 / YP87)).